The following is a 134-amino-acid chain: Ribosome-binding factor A (134 aa).

The protein belongs to the RbfA family. In terms of assembly, monomer. Binds 30S ribosomal subunits, but not 50S ribosomal subunits or 70S ribosomes.

It localises to the cytoplasm. One of several proteins that assist in the late maturation steps of the functional core of the 30S ribosomal subunit. Associates with free 30S ribosomal subunits (but not with 30S subunits that are part of 70S ribosomes or polysomes). Required for efficient processing of 16S rRNA. May interact with the 5'-terminal helix region of 16S rRNA. This Psychrobacter arcticus (strain DSM 17307 / VKM B-2377 / 273-4) protein is Ribosome-binding factor A.